Consider the following 125-residue polypeptide: Urotensin-2 (125 aa).

A signal peptide spans 1 to 20 (MYKLASCCLLFIGFLNPLFS). Residues 21–111 (LPLLDSGEVS…HLLARIRKPY (91 aa)) constitute a propeptide that is removed on maturation. Cys119 and Cys124 form a disulfide bridge.

Belongs to the urotensin-2 family.

It localises to the secreted. In terms of biological role, highly potent vasoconstrictor. This is Urotensin-2 (UTS2) from Macaca mulatta (Rhesus macaque).